We begin with the raw amino-acid sequence, 87 residues long: Putative regulatory protein GTNG_1019 (87 aa).

This sequence belongs to the RemA family.

The polypeptide is Putative regulatory protein GTNG_1019 (Geobacillus thermodenitrificans (strain NG80-2)).